The primary structure comprises 127 residues: UPF0389 protein GA21628 (127 aa).

A helical membrane pass occupies residues 69-88 (IRLANIMIALTVIGCGIMVY).

This sequence belongs to the UPF0389 family.

The protein localises to the membrane. The protein is UPF0389 protein GA21628 of Drosophila pseudoobscura pseudoobscura (Fruit fly).